The chain runs to 105 residues: Plastocyanin (105 aa).

Positions 1–105 (ETYTVKLGSD…GMVGKITVAG (105 aa)) constitute a Plastocyanin-like domain. Cu(2+) contacts are provided by histidine 39, cysteine 89, histidine 92, and methionine 97.

This sequence belongs to the plastocyanin family. Cu(2+) serves as cofactor.

The protein localises to the cellular thylakoid membrane. Its function is as follows. Participates in electron transfer between P700 and the cytochrome b6-f complex in photosystem I. This is Plastocyanin (petE) from Anabaena variabilis.